We begin with the raw amino-acid sequence, 139 residues long: Putative pre-16S rRNA nuclease (139 aa).

It belongs to the YqgF nuclease family.

It is found in the cytoplasm. In terms of biological role, could be a nuclease involved in processing of the 5'-end of pre-16S rRNA. The sequence is that of Putative pre-16S rRNA nuclease from Streptococcus pyogenes serotype M2 (strain MGAS10270).